Reading from the N-terminus, the 803-residue chain is MALEEVVRYLGPHNEIPLTLTRDSETGHFLLKHFLPILQQYHDTGNINETNPDSFPTDEERNKLLAHYGIAVNTDDRGELWIELEKCLQLLNMLNLFGLFQDAFEFEEPETDQDEEDPSHSKLPENKTKSENSKDNISSKRINNLQDMSLDSDAHRELGSPLKKLKIDTSVIDAESDSTPNTARGKPNDDINKGPSGDNENNGTDDNDRTAGPIITFTHDLTSDFLSSPLKIMKALPSPVVNDNEQKMKLEAFLQRLLFPEIQEMPTSLNNDSSNRNSEGGSSNQQQQHVSFDSLLQEVNDAFPNTQLNLNIPVDEHGNTPLHWLTSIANLELVKHLVKHGSNRLYGDNMGESCLVKAVKSVNNYDSGTFEALLDYLYPCLILEDSMNRTILHHIIITSGMTGCSAAAKYYLDILMGWIVKKQNRPIQSGTNEKESKPNDKNGERKDSILENLDLKWIIANMLNAQDSNGDTCLNIAARLGNISIVDALLDYGADPFIANKSGLRPVDFGAGTSKLQNTNGGDENSKMVSKGDYDGQKNGKAKKIRSQLLKNPPETTSLINDVQNLLNSISKDYENETVQYNEKLEKLHKELNEQREELANSREQLANVKQLKDEYSLMQEQLTNLKAGIEEEEESFREESKKLGIIADESSGIDWDSSEYDADEPFKVEFLSDFLEDKLQKNYEGDISKLLEAESKEQIMEQIRNQLPAEKIQSMLPPTVLLKARINAYKRNDKHLTNVLDTISTKQSELENKFRRVLSLCLKIDENKVDNMLDGLLQAISSEDPQDIDTDEMQDFLKKHAS.

Acidic residues predominate over residues 108–117; the sequence is EPETDQDEED. A disordered region spans residues 108–150; the sequence is EPETDQDEEDPSHSKLPENKTKSENSKDNISSKRINNLQDMSL. Residues 118–138 show a composition bias toward basic and acidic residues; that stretch reads PSHSKLPENKTKSENSKDNIS. The span at 139-149 shows a compositional bias: polar residues; the sequence is SKRINNLQDMS. Residue S149 is modified to Phosphoserine. At S160 the chain carries Phosphoserine; by CDC28. Disordered regions lie at residues 169–212 and 266–288; these read TSVI…RTAG and PTSLNNDSSNRNSEGGSSNQQQQ. A Phosphoserine modification is found at S176. Phosphothreonine is present on residues T179 and T182. The span at 270–288 shows a compositional bias: low complexity; sequence NNDSSNRNSEGGSSNQQQQ. ANK repeat units lie at residues 318–346, 347–383, 384–469, 470–498, and 499–514; these read GNTPLHWLTSIANLELVKHLVKHGSNRLY, GDNMGESCLVKAVKSVNNYDSGTFEALLDYLYPCLIL, EDSM…QDSN, GDTCLNIAARLGNISIVDALLDYGADPFI, and ANKSGLRPVDFGAGTS. Positions 512-540 are disordered; it reads GTSKLQNTNGGDENSKMVSKGDYDGQKNG. Residues 514 to 523 are compositionally biased toward polar residues; that stretch reads SKLQNTNGGD. A compositionally biased stretch (basic and acidic residues) spans 524 to 538; it reads ENSKMVSKGDYDGQK. S547 is subject to Phosphoserine.

In terms of assembly, component of the transcription complex MCB-binding factor (MBF) composed of SWI6 and MBP1. Component of the transcription complex SCB-binding factor (SBF) composed of SWI6 and SWI4. Interacts with MSA1 and STB1. In terms of processing, phosphorylated by CDC28 and dephosphorylated by CDC14.

The protein localises to the nucleus. The protein resides in the cytoplasm. Its function is as follows. Part of a complex involved in cell-cycle-dependent transcription. SWI4 and SWI6 are required for formation of the cell-cycle box factor-DNA complex. The repeated element in the upstream region of HO (5'-CACGAAAA-3') is called the cell cycle box (CCB). The sequence is that of Regulatory protein SWI6 (SWI6) from Saccharomyces cerevisiae (strain ATCC 204508 / S288c) (Baker's yeast).